We begin with the raw amino-acid sequence, 259 residues long: Isoepoxydon dehydrogenase patN (259 aa).

The NADP(+) site is built by asparagine 96 and arginine 125. Catalysis depends on proton donor residues serine 143 and serine 144. Residues tyrosine 158, lysine 162, and isoleucine 191 each coordinate NADP(+). Tyrosine 158 functions as the Proton acceptor in the catalytic mechanism. The active-site Lowers pKa of active site Tyr is the lysine 162.

It belongs to the short-chain dehydrogenases/reductases (SDR) family.

It is found in the cytoplasm. The protein resides in the cytosol. It carries out the reaction isoepoxydon + NADP(+) = phyllostine + NADPH + H(+). It functions in the pathway mycotoxin biosynthesis; patulin biosynthesis. Isoepoxydon dehydrogenase; part of the gene cluster that mediates the biosynthesis of patulin, an acetate-derived tetraketide mycotoxin produced by several fungal species that shows antimicrobial properties against several bacteria. PatN catalyzes the conversion of isoepoxydon into phyllostine. The pathway begins with the synthesis of 6-methylsalicylic acid by the polyketide synthase (PKS) patK via condensation of acetate and malonate units. The 6-methylsalicylic acid decarboxylase patG then catalyzes the decarboxylation of 6-methylsalicylic acid to yield m-cresol (also known as 3-methylphenol). These first reactions occur in the cytosol. The intermediate m-cresol is then transported into the endoplasmic reticulum where the cytochrome P450 monooxygenase patH converts it to m-hydroxybenzyl alcohol, which is further converted to gentisyl alcohol by the cytochrome P450 monooxygenase patI. The oxidoreductases patJ and patO further convert gentisyl alcohol to isoepoxydon in the vacuole. PatN catalyzes then the transformation of isoepoxydon into phyllostine. The cluster protein patF is responsible for the conversion from phyllostine to neopatulin whereas the alcohol dehydrogenase patD converts neopatulin to E-ascladiol. The steps between isoepoxydon and E-ascladiol occur in the cytosol, and E-ascladiol is probably secreted to the extracellular space by one of the cluster-specific transporters patC or patM. Finally, the secreted patulin synthase patE catalyzes the conversion of E-ascladiol to patulin. This Aspergillus clavatus (strain ATCC 1007 / CBS 513.65 / DSM 816 / NCTC 3887 / NRRL 1 / QM 1276 / 107) protein is Isoepoxydon dehydrogenase patN.